We begin with the raw amino-acid sequence, 212 residues long: ATP synthase subunit 5, mitochondrial (212 aa).

The N-terminal 17 residues, 1-17, are a transit peptide targeting the mitochondrion; it reads MFNRVFTRSFASSLRAA.

It belongs to the ATPase delta chain family. F-type ATPases have 2 components, CF(1) - the catalytic core - and CF(0) - the membrane proton channel. CF(1) has five subunits: alpha(3), beta(3), gamma(1), delta(1), epsilon(1). CF(0) has three main subunits: a, b and c.

It is found in the mitochondrion. It localises to the mitochondrion inner membrane. Mitochondrial membrane ATP synthase (F(1)F(0) ATP synthase or Complex V) produces ATP from ADP in the presence of a proton gradient across the membrane which is generated by electron transport complexes of the respiratory chain. F-type ATPases consist of two structural domains, F(1) - containing the extramembraneous catalytic core and F(0) - containing the membrane proton channel, linked together by a central stalk and a peripheral stalk. During catalysis, ATP synthesis in the catalytic domain of F(1) is coupled via a rotary mechanism of the central stalk subunits to proton translocation. Part of the complex F(0) domain and the peripheric stalk, which acts as a stator to hold the catalytic alpha(3)beta(3) subcomplex and subunit a/ATP6 static relative to the rotary elements. The chain is ATP synthase subunit 5, mitochondrial (ATP5) from Saccharomyces cerevisiae (strain ATCC 204508 / S288c) (Baker's yeast).